The sequence spans 344 residues: Interferon gamma receptor 1-like (344 aa).

The N-terminal stretch at 1 to 22 (MSKHAVVQFGVVYALLFPGVFG) is a signal peptide. Residues 23-229 (FVPSPTNVSV…QPTPETDKTG (207 aa)) are Extracellular-facing. Residues 24–102 (VPSPTNVSVV…TAHDGQEKSE (79 aa)) form the Fibronectin type-III domain. N-linked (GlcNAc...) asparagine glycosylation is found at Asn-29, Asn-44, Asn-132, and Asn-189. A helical transmembrane segment spans residues 230 to 250 (IIAALIGGATVVLFIIMGFVW). Residues 251 to 344 (LLWRKWSNIP…SSDYDRPKFL (94 aa)) lie on the Cytoplasmic side of the membrane. Positions 300–344 (TEEDQSVSARDDTGADPPVVSEEGMAGEDSQGLGCSSDYDRPKFL) are disordered.

Belongs to the type II cytokine receptor family. As to expression, highly expressed in brain. Also detected in spleen, heart, intestine, gill and kidney. In immune cell populations, detected at low levels in monocytes, peripheral blood leukocytes, splenocytes, neutrophils and mature macrophages.

The protein resides in the cell membrane. In terms of biological role, receptor which shows binding specificity for the cytokine ifng1 (interferon gamma 1). The polypeptide is Interferon gamma receptor 1-like (Carassius auratus (Goldfish)).